A 413-amino-acid chain; its full sequence is MGDDRPFVCSAPGCGQRFTNEDHLAVHKHKHEMTLKFGPARTDSVIIADQTPTPTRFLKNCEEVGLFNELASSFEHEFKKASDDDEKKGAAGPLDMSLPSTPDIKIKEEEPVEVDSSPPDSPASSPCSPPLKEKEVTTKPVVISTPTPTIVRPGSLPLHLGYDPLHPTLPSPTSVITQAPPSNRQIGSPTGSLPLVMHLANGQTMPMLPGPPVQMPSVISLARPVSMVPNIPGIPGPPVNNSGSISPSGHPMPSEAKMRLKATLTHQVSSINGGCGMVVGTASTMVTARPEQNQILIQHPDAPSPAQPQVSPAQPTPSTGGRRRRTVDEDPDERRQRFLERNRAAASRCRQKRKLWVSSLEKKAEELTSQNIQLSNEVTLLRNEVAQLKQLLLAHKDCPVTALQKKTQGYLGK.

The interval 1-285 is transactivation domain; the sequence is MGDDRPFVCS…GMVVGTASTM (285 aa). The segment at 7-31 adopts a C2H2-type zinc-finger fold; the sequence is FVCSAPGCGQRFTNEDHLAVHKHKH. Thr51 carries the phosphothreonine; by MAPK11 modification. Residues Thr53 and Thr101 each carry the phosphothreonine modification. 2 disordered regions span residues 81–140 and 299–337; these read ASDD…TTKP and HPDAPSPAQPQVSPAQPTPSTGGRRRRTVDEDPDERRQR. Lys107 participates in a covalent cross-link: Glycyl lysine isopeptide (Lys-Gly) (interchain with G-Cter in SUMO1). 2 stretches are compositionally biased toward low complexity: residues 114-126 and 307-320; these read VDSSPPDSPASSP and QPQVSPAQPTPSTG. Positions 326–337 are enriched in basic and acidic residues; it reads TVDEDPDERRQR. Residues 332–395 form the bZIP domain; sequence DERRQRFLER…AQLKQLLLAH (64 aa). The tract at residues 334-354 is basic motif; that stretch reads RRQRFLERNRAAASRCRQKRK. Residues 360-388 are leucine-zipper; that stretch reads LEKKAEELTSQNIQLSNEVTLLRNEVAQL.

It belongs to the bZIP family. In terms of assembly, homodimer; binds DNA as homodimer. Heterodimer; heterodimerizes with other members of ATF family and with JUN family members. Interacts with JNK2; the interaction does not phosphorylate ATF7 but acts as a docking site for other ATF-associated partners such as JUN family members. Interacts (via its transactivation domain) with TAF12 the interaction potentiates the transactivation activity and is inhibited by ATF7 sumoylation. Interacts with TAF4; the interaction inhibits the TAF12-dependent transactivation. Interacts with MAPK9; the interaction does not phosphorylate ATF7 but acts as a docking site for ATF7-associated partners such as JUN. Interacts with Ku complex components XRCC6 and XRCC7. Interacts with TERT. In terms of processing, on EGF stimulation, phosphorylated first on Thr-53 allowing subsequent phosphorylation on Thr-51. This latter phosphorylation prevents sumoylation, increases binding to TAF12 and enhances transcriptional activity. Social isolation stress as well as TNF-alpha also induce the phosphorylation of ATF7. Phosphorylated in proliferating colonic and small intestinal epithelial cells. Post-translationally, sumoylation delays nuclear localization and inhibits transactivation activity through preventing binding to TAF12. RANBP2 appears to be the specific E3 ligase.

The protein localises to the nucleus. It is found in the nucleoplasm. Its subcellular location is the chromosome. The protein resides in the telomere. Its function is as follows. Stress-responsive chromatin regulator that plays a role in various biological processes including innate immunological memory, adipocyte differentiation or telomerase regulation. In absence of stress, contributes to the formation of heterochromatin and heterochromatin-like structure by recruiting histone H3K9 tri- and di-methyltransferases thus silencing the transcription of target genes such as Htr5b, STAT1 in adipocytes, or genes involved in innate immunity in macrophages and adipocytes. Phosphorylation of ATF7 disrupts interactions with histone methyltransferase and enhances the association with coactivators containing histone acetyltransferase and/or histone demethylase, leading to disruption of the heterochromatin-like structure and subsequently transcriptional activation. In response to TNF-alpha, which is induced by various stresses, phosphorylated ATF7 and telomerase are released from telomeres leading to telomere shortening. Also plays a role in maintaining epithelial regenerative capacity and protecting against cell death during intestinal epithelial damage and repair. This is Cyclic AMP-dependent transcription factor ATF-7 (Atf7) from Mus musculus (Mouse).